The primary structure comprises 40 residues: Dolichyl-diphosphooligosaccharide--protein glycosyltransferase subunit 4 (40 aa).

Residues 1 to 4 (MITD) lie on the Lumenal side of the membrane. Residues 5–25 (VQLAIFSNVLGVFLFLLVVAY) form a helical membrane-spanning segment. Topologically, residues 26–40 (HYINANTGKPIPKAK) are cytoplasmic.

This sequence belongs to the OST4 family. Component of the oligosaccharyltransferase (OST) complex.

It is found in the endoplasmic reticulum membrane. In terms of biological role, subunit of the oligosaccharyl transferase (OST) complex that catalyzes the initial transfer of a defined glycan (Glc(3)Man(9)GlcNAc(2) in eukaryotes) from the lipid carrier dolichol-pyrophosphate to an asparagine residue within an Asn-X-Ser/Thr consensus motif in nascent polypeptide chains, the first step in protein N-glycosylation. N-glycosylation occurs cotranslationally and the complex associates with the Sec61 complex at the channel-forming translocon complex that mediates protein translocation across the endoplasmic reticulum (ER). All subunits are required for a maximal enzyme activity. The sequence is that of Dolichyl-diphosphooligosaccharide--protein glycosyltransferase subunit 4 from Drosophila ananassae (Fruit fly).